The sequence spans 154 residues: 17 kDa surface antigen (154 aa).

An N-terminal signal peptide occupies residues 1–19 (MKLLSKIMVIALATSMLQA). The N-palmitoyl cysteine moiety is linked to residue C20. A lipid anchor (S-diacylglycerol cysteine) is attached at C20.

It belongs to the rickettsiale 17 kDa surface antigen family.

The protein localises to the cell outer membrane. The chain is 17 kDa surface antigen (omp) from Rickettsia parkeri.